Consider the following 228-residue polypeptide: Lipoprotein-releasing system ATP-binding protein LolD (228 aa).

In terms of domain architecture, ABC transporter spans Ile6 to Ser228. Residue Gly42 to Thr49 coordinates ATP.

The protein belongs to the ABC transporter superfamily. Lipoprotein translocase (TC 3.A.1.125) family.

The protein localises to the cell inner membrane. Usually LolD forms an ABC transporter complex with LolC and LolE involved in the translocation of lipoprotein, in an ATP-dependent manner. However, LolE is certainly not functional as it is frameshifted. In Buchnera aphidicola subsp. Acyrthosiphon pisum (strain APS) (Acyrthosiphon pisum symbiotic bacterium), this protein is Lipoprotein-releasing system ATP-binding protein LolD.